The chain runs to 72 residues: Disintegrin crotatroxin (72 aa).

The Disintegrin domain occupies 1 to 72 (AGEECDCGSP…ADCPRNGLYG (72 aa)). Intrachain disulfides connect cysteine 5-cysteine 20, cysteine 7-cysteine 15, cysteine 14-cysteine 37, cysteine 28-cysteine 34, cysteine 33-cysteine 58, and cysteine 46-cysteine 65. The short motif at 50-52 (RGD) is the Cell attachment site element.

This sequence belongs to the venom metalloproteinase (M12B) family. P-II subfamily. P-IIa sub-subfamily. As to quaternary structure, monomer. In terms of tissue distribution, expressed by the venom gland.

Its subcellular location is the secreted. Inhibits fibrinogen interaction with platelets. Acts by binding to the alpha-IIb/beta-3 (ITGA2B/ITGB3) on the platelet surface and inhibits aggregation induced by ADP, thrombin, platelet-activating factor and collagen. Functionally, inhibits ADP-induced platelet aggregation (IC(50) = 17.5nM), cancer cell migration in vitro, and experimental lung tumor colonization of cancer cells. The polypeptide is Disintegrin crotatroxin (Crotalus atrox (Western diamondback rattlesnake)).